Here is a 460-residue protein sequence, read N- to C-terminus: tRNA modification GTPase MnmE (460 aa).

3 residues coordinate (6S)-5-formyl-5,6,7,8-tetrahydrofolate: arginine 24, glutamate 81, and lysine 121. Residues 218-385 (GMVVAIAGPP…LIAAIEDFAA (168 aa)) form the TrmE-type G domain. GTP is bound by residues 228-233 (NVGKST), 247-253 (SPHAGTT), and 272-275 (DTAG). Mg(2+) is bound by residues serine 232 and threonine 253. Lysine 460 is a binding site for (6S)-5-formyl-5,6,7,8-tetrahydrofolate.

Belongs to the TRAFAC class TrmE-Era-EngA-EngB-Septin-like GTPase superfamily. TrmE GTPase family. In terms of assembly, homodimer. Heterotetramer of two MnmE and two MnmG subunits. It depends on K(+) as a cofactor.

The protein localises to the cytoplasm. Exhibits a very high intrinsic GTPase hydrolysis rate. Involved in the addition of a carboxymethylaminomethyl (cmnm) group at the wobble position (U34) of certain tRNAs, forming tRNA-cmnm(5)s(2)U34. This Rhodopseudomonas palustris (strain BisB5) protein is tRNA modification GTPase MnmE.